We begin with the raw amino-acid sequence, 275 residues long: MHSRQQEIAVALHVCAPFTGPESVQTEIERRIRFIQSCLRESGMKTLVLGISGGVDSTTAGLLAQRAVEGMRAAGEGDHYRFIAVRLPYQVQHDEHEAQLAVDTIKPDECHTVNIGTAVLGLAAATEALEPLSPEQRDFVLGNTKARMRMVAQYTIANARQGLVIGTDHAAEAVMGFFTKFGDGACDLTPLAGLVKDQVRQIAAALGAPEQLVHKVPTADLEELSPGKPDEAAHGVSYRNIDDFLQGKPVPDEAAQIIVDTYDKTAHKRQLPKEP.

50-57 (GISGGVDS) is an ATP binding site. D56 contributes to the Mg(2+) binding site. Position 147 (R147) interacts with deamido-NAD(+). T167 serves as a coordination point for ATP. E172 lines the Mg(2+) pocket. K180 and D187 together coordinate deamido-NAD(+). Residues K196 and T218 each contribute to the ATP site. 267-268 (HK) lines the deamido-NAD(+) pocket.

It belongs to the NAD synthetase family. Homodimer.

The enzyme catalyses deamido-NAD(+) + NH4(+) + ATP = AMP + diphosphate + NAD(+) + H(+). It functions in the pathway cofactor biosynthesis; NAD(+) biosynthesis; NAD(+) from deamido-NAD(+) (ammonia route): step 1/1. Its function is as follows. Catalyzes the ATP-dependent amidation of deamido-NAD to form NAD. Uses ammonia as a nitrogen source. In Stutzerimonas stutzeri (strain A1501) (Pseudomonas stutzeri), this protein is NH(3)-dependent NAD(+) synthetase.